The chain runs to 689 residues: Elongation factor G (689 aa).

In terms of domain architecture, tr-type G spans 9-283 (AKFRNIGIMA…AIIEFMPSPL (275 aa)). GTP is bound by residues 18–25 (AHIDAGKT), 82–86 (DTPGH), and 136–139 (NKMD).

The protein belongs to the TRAFAC class translation factor GTPase superfamily. Classic translation factor GTPase family. EF-G/EF-2 subfamily.

The protein resides in the cytoplasm. Catalyzes the GTP-dependent ribosomal translocation step during translation elongation. During this step, the ribosome changes from the pre-translocational (PRE) to the post-translocational (POST) state as the newly formed A-site-bound peptidyl-tRNA and P-site-bound deacylated tRNA move to the P and E sites, respectively. Catalyzes the coordinated movement of the two tRNA molecules, the mRNA and conformational changes in the ribosome. In Clostridium botulinum (strain 657 / Type Ba4), this protein is Elongation factor G.